Here is a 185-residue protein sequence, read N- to C-terminus: MIILGIDEAGRGPLSGPVVAAGVILDPEKTIDGLADSKKLTEKKRQSLYEVITAHAKAYTIVEVSPQQIDQLNILQATLKAMNQVADNLKGQFDKVLVDGNKLPNWDYNSEAIVKGDSKVQEISAASILAKVHRDNICLEHDRLFPQYGFAKHKGYPTKEHLENIRKYGVLNIHRKSYKPIQLLL.

Residues 1 to 185 (MIILGIDEAG…KSYKPIQLLL (185 aa)) enclose the RNase H type-2 domain. Asp-7, Glu-8, and Asp-99 together coordinate a divalent metal cation.

It belongs to the RNase HII family. It depends on Mn(2+) as a cofactor. The cofactor is Mg(2+).

Its subcellular location is the cytoplasm. It catalyses the reaction Endonucleolytic cleavage to 5'-phosphomonoester.. Its function is as follows. Endonuclease that specifically degrades the RNA of RNA-DNA hybrids. This Francisella philomiragia subsp. philomiragia (strain ATCC 25017 / CCUG 19701 / FSC 153 / O#319-036) protein is Ribonuclease HII.